The sequence spans 82 residues: Pigment-dispersing hormone peptides (82 aa).

Positions 1–26 (MIGKYLSWFMLAFLFGFVLESYRVQS) are cleaved as a signal peptide. Position 80 is an alanine amide (alanine 80).

The protein belongs to the arthropod PDH family. Expressed strongly in the head and weakly in the ventral nerve cord. Not detected in the midgut cecum or hindgut. In the cephalic neural complex, specifically localized to cells within the optic lobe, anteromedian protocerebrum, accessory lobe, tritocerebrum, and subesophageal ganglion.

The protein localises to the secreted. Functionally, the pigment-dispersing hormone causes the migration of the distal retinal pigment into the proximal end of the pigment chromatophore cells and thus decreases the amount of light entering the retinulas. May also function as a neurotransmitter and/or neuromodulator. The protein is Pigment-dispersing hormone peptides of Armadillidium vulgare (Pillbug).